We begin with the raw amino-acid sequence, 136 residues long: Large-conductance mechanosensitive channel (136 aa).

The next 2 helical transmembrane spans lie at F10–G30 and G76–I96.

Belongs to the MscL family. As to quaternary structure, homopentamer.

It localises to the cell inner membrane. In terms of biological role, channel that opens in response to stretch forces in the membrane lipid bilayer. May participate in the regulation of osmotic pressure changes within the cell. This chain is Large-conductance mechanosensitive channel, found in Pectobacterium atrosepticum (strain SCRI 1043 / ATCC BAA-672) (Erwinia carotovora subsp. atroseptica).